Here is a 1000-residue protein sequence, read N- to C-terminus: ATP-dependent DNA/RNA helicase DHX36 (1000 aa).

Positions 1 to 43 (MSYDYHQSWSRDGGPRGSGQGSGGGGGGSRGSGGGGGGRGGRG) are required for recruitment to cytoplasmic stress granules. The tract at residues 1-53 (MSYDYHQSWSRDGGPRGSGQGSGGGGGGSRGSGGGGGGRGGRGRHPAHLKGRE) is disordered. A required for the pre-miR-134 transport region spans residues 1 to 96 (MSYDYHQSWS…IVQLLNSVQA (96 aa)). Positions 1-192 (MSYDYHQSWS…KKTDPRYIEM (192 aa)) are necessary for nuclear and nucleolar caps localizations. The segment covering 15–40 (PRGSGQGSGGGGGGSRGSGGGGGGRG) has biased composition (gly residues). Residues 45-67 (HPAHLKGREIGLWYAKKQTQKNK) are DSM (DHX36-specific motif). Residues 45-97 (HPAHLKGREIGLWYAKKQTQKNKEAERQERAVVHMDERREEQIVQLLNSVQAK) form a required for G4-DNA- and G4-RNA-binding region. RecA-like domain regions lie at residues 98–378 (NDKD…MIHI) and 379–620 (PGFT…DYQL). The residue at position 153 (S153) is a Phosphoserine. The 171-residue stretch at 209-379 (VNLINNHQVT…FGNCPMIHIP (171 aa)) folds into the Helicase ATP-binding domain. Position 225 to 230 (225 to 230 (GCGKTT)) interacts with ATP. Residues 257 to 309 (RRISAISVAERVAAERAESCGNGNSTGYQIRLQSRLPRKQGSILYCTTGIILQ) form a necessary for interaction with single-stranded DNA at the 3'-end of the G4-DNA structure region. The DEAH box motif lies at 326–329 (DEIH). Mg(2+)-binding residues include E327 and H329. One can recognise a Helicase C-terminal domain in the interval 469 to 639 (ALIRYIVLEE…ELCLQIKILR (171 aa)). The necessary for interaction with single-stranded DNA at the 3'-end of the G4-DNA structure stretch occupies residues 490–549 (WDNISTLHDLLMSQVMFKSDRFLIIPLHSLMPTVNQTQVFKKTPPGVRKIVIATNIAETS). The Nuclear localization signal signature appears at 509 to 520 (DRFLIIPLHSLM). ATP contacts are provided by residues S549 and 594 to 597 (RAGR). The interval 621–690 (PEILRTPLEE…LGVHLARLPV (70 aa)) is WH domain. Necessary for interaction with single-stranded DNA at the 3'-end of the G4-DNA structure stretches follow at residues 630–689 (ELCL…ARLP), 841–852 (NLGKKRKMVKVH), and 862–892 (HPKSVNVEQTDFHYNWLIYHLKMRTSSIYLY). Residues 833-897 (PKVAKIRLNL…SIYLYDCTEV (65 aa)) are OB-fold-like subdomains. An N6-acetyllysine modification is found at K939.

Found in a multi-helicase-TICAM1 complex at least composed of DHX36, DDX1, DDX21 and TICAM1; this complex exists in resting cells with or without dsRNA poly(I:C) ligand stimulation. Interacts (via C-terminus) with TICAM1 (via TIR domain). Interacts (via C-terminus) with DDX21; this interaction serves as bridges to TICAM1. Interacts with TERT; this interaction is dependent on the ability of DHX36 to bind to the G-quadruplex RNA (G4-RNA) structure present in the telomerase RNA template component (TERC). Interacts with DKC1; this interaction is dependent on the ability of DHX36 to bind to the G4-RNA structure present in TERC. Interacts with PARN; this interaction stimulates PARN to enhance uPA mRNA decay. Interacts with EXOSC3; this interaction occurs in a RNase-insensitive manner. Interacts with EXOSC10; this interaction occurs in a RNase-insensitive manner. Interacts with ILF3; this interaction occurs in a RNA-dependent manner. Interacts with ELAVL1; this interaction occurs in an RNA-dependent manner. Interacts with DDX5; this interaction occurs in a RNA-dependent manner. Interacts with DDX17; this interaction occurs in a RNA-dependent manner. Interacts with HDAC1; this interaction occurs in a RNA-dependent manner. Interacts with HDAC3; this interaction occurs in a RNA-dependent manner. Interacts with HDAC4. Interacts with AGO1. Interacts with AGO2. Interacts with ERCC6. Mg(2+) is required as a cofactor.

The protein localises to the nucleus. The protein resides in the cytoplasm. Its subcellular location is the cytosol. It is found in the stress granule. It localises to the nucleus speckle. The protein localises to the chromosome. The protein resides in the telomere. Its subcellular location is the mitochondrion. It is found in the perikaryon. It localises to the cell projection. The protein localises to the dendrite. The protein resides in the axon. It carries out the reaction ATP + H2O = ADP + phosphate + H(+). Its activity is regulated as follows. ATPase activity is enhanced in the presence of homomeric poly(U) RNAs, but not by double-stranded DNA (dsDNA), double-stranded RNA (dsRNA) and tRNA. Functionally, multifunctional ATP-dependent helicase that unwinds G-quadruplex (G4) structures. Plays a role in many biological processes such as genomic integrity, gene expression regulations and as a sensor to initiate antiviral responses. G4 structures correspond to helical structures containing guanine tetrads. Binds with high affinity to and unwinds G4 structures that are formed in nucleic acids (G4-DNA and G4-RNA). Plays a role in genomic integrity. Converts the G4-RNA structure present in telomerase RNA template component (TREC) into a double-stranded RNA to promote P1 helix formation that acts as a template boundary ensuring accurate reverse transcription. Plays a role in transcriptional regulation. Resolves G4-DNA structures in promoters of genes, such as YY1, KIT/c-kit and ALPL and positively regulates their expression. Plays a role in post-transcriptional regulation. Unwinds a G4-RNA structure located in the 3'-UTR polyadenylation site of the pre-mRNA TP53 and stimulates TP53 pre-mRNA 3'-end processing in response to ultraviolet (UV)-induced DNA damage. Binds to the precursor-microRNA-134 (pre-miR-134) terminal loop and regulates its transport into the synapto-dendritic compartment. Involved in the pre-miR-134-dependent inhibition of target gene expression and the control of dendritic spine size. Plays a role in the regulation of cytoplasmic mRNA translation and mRNA stability. Binds to both G4-RNA structures and alternative non-quadruplex-forming sequence within the 3'-UTR of the PITX1 mRNA regulating negatively PITX1 protein expression. Binds to both G4-RNA structure in the 5'-UTR and AU-rich elements (AREs) localized in the 3'-UTR of NKX2-5 mRNA to either stimulate protein translation or induce mRNA decay in an ELAVL1-dependent manner, respectively. Also binds to ARE sequences present in several mRNAs mediating exosome-mediated 3'-5' mRNA degradation. Involved in cytoplasmic urokinase-type plasminogen activator (uPA) mRNA decay. Component of a multi-helicase-TICAM1 complex that acts as a cytoplasmic sensor of viral double-stranded RNA (dsRNA) and plays a role in the activation of a cascade of antiviral responses including the induction of pro-inflammatory cytokines via the adapter molecule TICAM1. Required for the early embryonic development and hematopoiesis. Involved in the regulation of cardioblast differentiation and proliferation during heart development. Involved in spermatogonia differentiation. May play a role in ossification. This chain is ATP-dependent DNA/RNA helicase DHX36, found in Rattus norvegicus (Rat).